The sequence spans 1776 residues: TOG array regulator of axonemal microtubules protein 1 (1776 aa).

2 TOG regions span residues 94–311 and 351–595; these read EEET…RRLE and PQEL…MPSS. HEAT repeat units follow at residues 175-212, 214-246, 250-288, 344-383, 389-426, 430-465, 466-503, and 505-542; these read AFSLALLPQLVVSLREDNPALRKDALQILHICLRRSSG, VLRTLIQGLESPDARLRASTALLLPILFTPEDL, LDLTEVIISLARKLGDQEMEEESETAFSSLQQIGERLGQ, NLKFEIIPQELHARLLDQEDYKNRTQAVEELKQLLGKFNP, ASLVGFISLLYNLLDDSNFKVVHGTLQVLHLLVIRLGE, QFLGPVIAASVKVLADNKLVIKQEYMKIFLKLMKEV, GPQRVLSLLLENLKHKHSRVREEVVNICICSLLTYPSE, and FDLPKLSFDLAPALVDSKRRVRQAALEAFAVLASSMGS. Disordered stretches follow at residues 655-676, 817-921, 970-1000, and 1062-1084; these read KNKLPWENEQPGVMGENQTSNS, ILPS…RGIN, HSSLRSLRNSAAKKRAKLSGSSSTSDVDSPD, and TRLSSAKKTSHAAEQSPSAGFTR. 3 stretches are compositionally biased toward polar residues: residues 826 to 836, 845 to 855, and 871 to 892; these read PRTSPKHTSPL, DNSISFSNSWP, and LANQKSSDPTGENFQEKTTAVQ. A compositionally biased stretch (low complexity) spans 988–1000; it reads SGSSSTSDVDSPD. Residues 1259–1481 are TOG 3; it reads DIALTEALRL…YIKESVKNLR (223 aa). 2 HEAT repeats span residues 1297-1334 and 1338-1375; these read TKLHETTFAVVQEVKNLRSGVSRAAVVCLGDLFTYLKK and QELDSAVRALLHKAGESNTFIREDVDKALKAMVNNVTP. A disordered region spans residues 1493–1536; it reads ASAKGRRSHPGSVGNTRSSSVSRDAFSSSEREVTEVREVPRKSA. Low complexity predominate over residues 1509-1520; that stretch reads RSSSVSRDAFSS. Basic and acidic residues predominate over residues 1521 to 1533; sequence SEREVTEVREVPR. Residues 1540–1776 are TOG 4; sequence SLESAEYIKV…LLDVTVLSEL (237 aa). HEAT repeat units lie at residues 1541–1578, 1582–1619, and 1623–1661; these read LESAEYIKVITGLLNAKDFRDRINGIKQLLSDTENNQE, GNIVKIFDAFKSRLHDSNSKVNLVALETMHKMIPLLRD, and PIINMLIPAIVDNNLNSKNPGIYAAATNVVHALSQHVDN.

It belongs to the Crescerin family. As to quaternary structure, interacts with ARMC9. Interacts with CCDC66, CEP104 and CSPP1.

Its subcellular location is the cell projection. The protein resides in the cilium. It localises to the cytoplasm. The protein localises to the cytoskeleton. It is found in the cilium axoneme. In terms of biological role, involved in ciliogenesis. It is required for appropriate acetylation and polyglutamylation of ciliary microtubules, and regulation of cilium length. Interacts with microtubules and promotes microtubule polymerization via its HEAT repeat domains, especially those in TOG region 2 and 4. In Mus musculus (Mouse), this protein is TOG array regulator of axonemal microtubules protein 1 (Togaram1).